Consider the following 209-residue polypeptide: Uracil phosphoribosyltransferase (209 aa).

Residues Arg-79, Arg-104, and Asp-131–Ser-139 contribute to the 5-phospho-alpha-D-ribose 1-diphosphate site. Residues Val-194 and Gly-199–Ala-201 contribute to the uracil site. Asp-200 is a binding site for 5-phospho-alpha-D-ribose 1-diphosphate.

It belongs to the UPRTase family. Mg(2+) serves as cofactor.

It carries out the reaction UMP + diphosphate = 5-phospho-alpha-D-ribose 1-diphosphate + uracil. The protein operates within pyrimidine metabolism; UMP biosynthesis via salvage pathway; UMP from uracil: step 1/1. Allosterically activated by GTP. Its function is as follows. Catalyzes the conversion of uracil and 5-phospho-alpha-D-ribose 1-diphosphate (PRPP) to UMP and diphosphate. The sequence is that of Uracil phosphoribosyltransferase from Bacillus mycoides (strain KBAB4) (Bacillus weihenstephanensis).